We begin with the raw amino-acid sequence, 630 residues long: DNA topoisomerase 4 subunit B (630 aa).

Residues Y5, N42, D69, 110 to 116, and K334 each bind ATP; that span reads GLHGVGI. One can recognise a Toprim domain in the interval 412–525; it reads TELFLVEGDS…NGHVYVALPP (114 aa). E418, D490, and D492 together coordinate Mg(2+).

Belongs to the type II topoisomerase family. ParE type 1 subfamily. As to quaternary structure, heterotetramer composed of ParC and ParE. The cofactor is Mg(2+). It depends on Mn(2+) as a cofactor. Ca(2+) serves as cofactor.

The enzyme catalyses ATP-dependent breakage, passage and rejoining of double-stranded DNA.. Its function is as follows. Topoisomerase IV is essential for chromosome segregation. It relaxes supercoiled DNA. Performs the decatenation events required during the replication of a circular DNA molecule. The sequence is that of DNA topoisomerase 4 subunit B from Salmonella typhi.